The primary structure comprises 396 residues: NADH-quinone oxidoreductase subunit D (396 aa).

This sequence belongs to the complex I 49 kDa subunit family. In terms of assembly, NDH-1 is composed of 14 different subunits. Subunits NuoB, C, D, E, F, and G constitute the peripheral sector of the complex.

It localises to the cell inner membrane. It catalyses the reaction a quinone + NADH + 5 H(+)(in) = a quinol + NAD(+) + 4 H(+)(out). Its function is as follows. NDH-1 shuttles electrons from NADH, via FMN and iron-sulfur (Fe-S) centers, to quinones in the respiratory chain. The immediate electron acceptor for the enzyme in this species is believed to be ubiquinone. Couples the redox reaction to proton translocation (for every two electrons transferred, four hydrogen ions are translocated across the cytoplasmic membrane), and thus conserves the redox energy in a proton gradient. This chain is NADH-quinone oxidoreductase subunit D, found in Orientia tsutsugamushi (strain Boryong) (Rickettsia tsutsugamushi).